Consider the following 461-residue polypeptide: Chromosomal replication initiator protein DnaA (461 aa).

Residues 1–83 are domain I, interacts with DnaA modulators; the sequence is MTASLWQQCL…LHFAVGRRPT (83 aa). The segment at 83–124 is domain II; the sequence is TAATVQMNTAAAPVADVRIGPAITVPSWTSKQDAMPEINHKS. The interval 125-341 is domain III, AAA+ region; the sequence is NINETYTFEN…GALNRVIANA (217 aa). Gly-169, Gly-171, Lys-172, and Thr-173 together coordinate ATP. The segment at 342 to 461 is domain IV, binds dsDNA; it reads RFTGKPINID…YSNLIRTLSS (120 aa).

It belongs to the DnaA family. In terms of assembly, oligomerizes as a right-handed, spiral filament on DNA at oriC.

The protein localises to the cytoplasm. Functionally, plays an essential role in the initiation and regulation of chromosomal replication. ATP-DnaA binds to the origin of replication (oriC) to initiate formation of the DNA replication initiation complex once per cell cycle. Binds the DnaA box (a 9 base pair repeat at the origin) and separates the double-stranded (ds)DNA. Forms a right-handed helical filament on oriC DNA; dsDNA binds to the exterior of the filament while single-stranded (ss)DNA is stabiized in the filament's interior. The ATP-DnaA-oriC complex binds and stabilizes one strand of the AT-rich DNA unwinding element (DUE), permitting loading of DNA polymerase. After initiation quickly degrades to an ADP-DnaA complex that is not apt for DNA replication. Binds acidic phospholipids. The sequence is that of Chromosomal replication initiator protein DnaA from Tolumonas auensis (strain DSM 9187 / NBRC 110442 / TA 4).